Here is a 194-residue protein sequence, read N- to C-terminus: Flagellin A2 (194 aa).

Positions 1-12 are excised as a propeptide; sequence MFEFITDEDERG.

It belongs to the archaeal flagellin family. Glycosylated.

The protein localises to the archaeal flagellum. Its function is as follows. Flagellin is the subunit protein which polymerizes to form the filaments of archaeal flagella. The protein is Flagellin A2 (flaA2) of Halobacterium salinarum (strain ATCC 700922 / JCM 11081 / NRC-1) (Halobacterium halobium).